Consider the following 471-residue polypeptide: Glutamate--tRNA ligase 1 (471 aa).

The 'HIGH' region signature appears at 10–20; the sequence is PSPTGFLHIGG. The interval 113 to 140 is disordered; sequence ARKEGRPPRYDGRWRDRDPSEAPKDRDP. Positions 239-243 match the 'KMSKS' region motif; the sequence is KLSKR. ATP is bound at residue K242.

This sequence belongs to the class-I aminoacyl-tRNA synthetase family. Glutamate--tRNA ligase type 1 subfamily. Monomer.

It localises to the cytoplasm. It carries out the reaction tRNA(Glu) + L-glutamate + ATP = L-glutamyl-tRNA(Glu) + AMP + diphosphate. Functionally, catalyzes the attachment of glutamate to tRNA(Glu) in a two-step reaction: glutamate is first activated by ATP to form Glu-AMP and then transferred to the acceptor end of tRNA(Glu). The chain is Glutamate--tRNA ligase 1 from Xanthobacter autotrophicus (strain ATCC BAA-1158 / Py2).